The chain runs to 177 residues: Peptide methionine sulfoxide reductase MsrA (177 aa).

The active site involves Cys15.

This sequence belongs to the MsrA Met sulfoxide reductase family.

It carries out the reaction L-methionyl-[protein] + [thioredoxin]-disulfide + H2O = L-methionyl-(S)-S-oxide-[protein] + [thioredoxin]-dithiol. The enzyme catalyses [thioredoxin]-disulfide + L-methionine + H2O = L-methionine (S)-S-oxide + [thioredoxin]-dithiol. Functionally, has an important function as a repair enzyme for proteins that have been inactivated by oxidation. Catalyzes the reversible oxidation-reduction of methionine sulfoxide in proteins to methionine. The protein is Peptide methionine sulfoxide reductase MsrA of Listeria monocytogenes serotype 4a (strain HCC23).